We begin with the raw amino-acid sequence, 162 residues long: NADH-quinone oxidoreductase subunit I (162 aa).

4Fe-4S ferredoxin-type domains lie at 52–82 and 93–122; these read LRRYPNGEERCIACKLCEAVCPAQAITIEAG and TRYDIDMVKCIYCGMCQEACPVDAIVEGPN. [4Fe-4S] cluster contacts are provided by C62, C65, C68, C72, C102, C105, C108, and C112.

It belongs to the complex I 23 kDa subunit family. As to quaternary structure, NDH-1 is composed of 14 different subunits. Subunits NuoA, H, J, K, L, M, N constitute the membrane sector of the complex. [4Fe-4S] cluster is required as a cofactor.

It is found in the cell inner membrane. It catalyses the reaction a quinone + NADH + 5 H(+)(in) = a quinol + NAD(+) + 4 H(+)(out). Its function is as follows. NDH-1 shuttles electrons from NADH, via FMN and iron-sulfur (Fe-S) centers, to quinones in the respiratory chain. The immediate electron acceptor for the enzyme in this species is believed to be ubiquinone. Couples the redox reaction to proton translocation (for every two electrons transferred, four hydrogen ions are translocated across the cytoplasmic membrane), and thus conserves the redox energy in a proton gradient. This chain is NADH-quinone oxidoreductase subunit I, found in Methylobacterium sp. (strain 4-46).